The following is a 152-amino-acid chain: tRNA-specific adenosine deaminase (152 aa).

Residues 2-111 form the CMP/dCMP-type deaminase domain; it reads AERTHFMELA…AQDPKGGAVE (110 aa). His53 provides a ligand contact to Zn(2+). The active-site Proton donor is the Glu55. Residues Cys83 and Cys86 each contribute to the Zn(2+) site.

It belongs to the cytidine and deoxycytidylate deaminase family. As to quaternary structure, homodimer. Zn(2+) serves as cofactor.

The enzyme catalyses adenosine(34) in tRNA + H2O + H(+) = inosine(34) in tRNA + NH4(+). Catalyzes the deamination of adenosine to inosine at the wobble position 34 of tRNA(Arg2). This is tRNA-specific adenosine deaminase from Agrobacterium fabrum (strain C58 / ATCC 33970) (Agrobacterium tumefaciens (strain C58)).